The sequence spans 98 residues: NADH-ubiquinone oxidoreductase chain 4L (98 aa).

3 consecutive transmembrane segments (helical) span residues 1 to 21 (MTPV…GLAF), 29 to 49 (ALLC…LWAL), and 58 to 78 (VAPM…LALL).

This sequence belongs to the complex I subunit 4L family.

It localises to the mitochondrion membrane. It carries out the reaction a ubiquinone + NADH + 5 H(+)(in) = a ubiquinol + NAD(+) + 4 H(+)(out). In terms of biological role, core subunit of the mitochondrial membrane respiratory chain NADH dehydrogenase (Complex I) which catalyzes electron transfer from NADH through the respiratory chain, using ubiquinone as an electron acceptor. Part of the enzyme membrane arm which is embedded in the lipid bilayer and involved in proton translocation. In Oncorhynchus clarkii (Cutthroat trout), this protein is NADH-ubiquinone oxidoreductase chain 4L (MT-ND4L).